A 174-amino-acid chain; its full sequence is Peptide deformylase (174 aa).

Positions 96 and 138 each coordinate Fe cation. Glu139 is a catalytic residue. Fe cation is bound at residue His142.

The protein belongs to the polypeptide deformylase family. Fe(2+) is required as a cofactor.

It carries out the reaction N-terminal N-formyl-L-methionyl-[peptide] + H2O = N-terminal L-methionyl-[peptide] + formate. Functionally, removes the formyl group from the N-terminal Met of newly synthesized proteins. Requires at least a dipeptide for an efficient rate of reaction. N-terminal L-methionine is a prerequisite for activity but the enzyme has broad specificity at other positions. The chain is Peptide deformylase from Nautilia profundicola (strain ATCC BAA-1463 / DSM 18972 / AmH).